The chain runs to 305 residues: MQNIPKNMFEPAAANAGDAEKISKKSLSLWKDAMLRFRSNKLAMVGLIIIVLIILMAIFAPMFSRYDYSTTNLLNADKPPSKDHWFGTDDLGRDIFVRTWVGARISIFIGVAAAVLDLLIGVIWGSISGFRGGRTDEIMMRIADILWAVPSLLMVILLMVVLPKGLFTIIIAMTITGWINMARIVRGQVLQLKNQEYVLASQTLGAKTSRLLFKHIVPNAMGSILVTMTLTVPTAIFTEAFLSYLGLGVPAPLASWGTMASDGLPALTYYPWRLFFPAGFICITMFGFNVVGDGLRDALDPKLRK.

The next 6 helical transmembrane spans lie at 43–63 (AMVG…APMF), 105–125 (ISIF…VIWG), 166–185 (LFTI…ARIV), 212–232 (LFKH…TLTV), 236–256 (IFTE…LASW), and 274–294 (LFFP…VGDG). Residues 103 to 292 (ARISIFIGVA…ITMFGFNVVG (190 aa)) form the ABC transmembrane type-1 domain.

Belongs to the binding-protein-dependent transport system permease family. OppBC subfamily. In terms of assembly, the complex is composed of two ATP-binding proteins (OppD and OppF), two transmembrane proteins (OppB and OppC) and a solute-binding protein (OppA).

The protein resides in the cell membrane. Functionally, part of the ABC transporter complex OppABCDF involved in the uptake of oligopeptides. Probably responsible for the translocation of the substrate across the membrane. Required for sporulation and genetic competence. In Bacillus subtilis (strain 168), this protein is Oligopeptide transport system permease protein OppC.